The primary structure comprises 294 residues: Thymidylate synthase (294 aa).

DUMP is bound by residues arginine 30 and 156–157 (RR). The active-site Nucleophile is the cysteine 176. DUMP is bound by residues 196–199 (RSGD), asparagine 207, and 237–239 (HVY). Aspartate 199 serves as a coordination point for (6R)-5,10-methylene-5,6,7,8-tetrahydrofolate. A (6R)-5,10-methylene-5,6,7,8-tetrahydrofolate-binding site is contributed by alanine 293.

Belongs to the thymidylate synthase family. Homodimer.

It catalyses the reaction dUMP + (6R)-5,10-methylene-5,6,7,8-tetrahydrofolate = 7,8-dihydrofolate + dTMP. The protein operates within pyrimidine metabolism; dTTP biosynthesis. The sequence is that of Thymidylate synthase from Ascaris suum (Pig roundworm).